The primary structure comprises 435 residues: ATP-dependent Clp protease ATP-binding subunit ClpX 3 (435 aa).

The 53-residue stretch at 1–53 (MSSDPPAKTQHCSFCGIEQGRDTPLIAGIEGQICEACVRLAEQVVANWGRKRS) folds into the ClpX-type ZB domain. Cysteine 12, cysteine 15, cysteine 34, and cysteine 37 together coordinate Zn(2+). 125 to 132 (PTGTGKTL) contributes to the ATP binding site.

The protein belongs to the ClpX chaperone family. Component of the ClpX-ClpP complex. Forms a hexameric ring that, in the presence of ATP, binds to fourteen ClpP subunits assembled into a disk-like structure with a central cavity, resembling the structure of eukaryotic proteasomes.

Its function is as follows. ATP-dependent specificity component of the Clp protease. It directs the protease to specific substrates. Can perform chaperone functions in the absence of ClpP. This chain is ATP-dependent Clp protease ATP-binding subunit ClpX 3, found in Methylococcus capsulatus (strain ATCC 33009 / NCIMB 11132 / Bath).